Here is a 377-residue protein sequence, read N- to C-terminus: uncharacterized protein (377 aa).

Disordered regions lie at residues 10–79 (YSDG…NVNN), 91–141 (KKNN…DKEE), 182–257 (EAKK…TTTT), 265–284 (ENEN…EPIE), and 289–326 (LEFN…KEEP). Low complexity-rich tracts occupy residues 14 to 24 (IPQPTITPPTQ), 46 to 79 (NKNN…NVNN), and 93 to 124 (NNNN…FNDN). 2 stretches are compositionally biased toward basic and acidic residues: residues 182–196 (EAKK…KRGE) and 209–218 (QTPDKKKKLE). A compositionally biased stretch (low complexity) spans 221 to 257 (TSKNNNKSSTTKTELTNTTTNTSSTTNPTTDTTTTTT). 2 stretches are compositionally biased toward basic and acidic residues: residues 265–274 (ENENQEKENN) and 292–303 (NKFEEKPIKEVK). The span at 311–320 (KRNKKRNNPK) shows a compositional bias: basic residues.

This is an uncharacterized protein from Dictyostelium discoideum (Social amoeba).